The sequence spans 543 residues: CTP synthase (543 aa).

The segment at 1 to 265 (MTRYIFVTGG…DDFVVERFGL (265 aa)) is amidoligase domain. Ser13 contributes to the CTP binding site. Residue Ser13 coordinates UTP. ATP contacts are provided by residues 14–19 (SLGKGI) and Asp71. Residues Asp71 and Glu139 each coordinate Mg(2+). Residues 146 to 148 (DIE), 186 to 191 (KTKPTQ), and Lys222 each bind CTP. UTP contacts are provided by residues 186-191 (KTKPTQ) and Lys222. The Glutamine amidotransferase type-1 domain maps to 290-541 (TIAMVGKYME…VNAALAQKAK (252 aa)). Gly351 lines the L-glutamine pocket. The Nucleophile; for glutamine hydrolysis role is filled by Cys378. L-glutamine is bound by residues 379-382 (LGMQ), Glu402, and Arg469. Active-site residues include His514 and Glu516.

It belongs to the CTP synthase family. Homotetramer.

It catalyses the reaction UTP + L-glutamine + ATP + H2O = CTP + L-glutamate + ADP + phosphate + 2 H(+). The catalysed reaction is L-glutamine + H2O = L-glutamate + NH4(+). The enzyme catalyses UTP + NH4(+) + ATP = CTP + ADP + phosphate + 2 H(+). It participates in pyrimidine metabolism; CTP biosynthesis via de novo pathway; CTP from UDP: step 2/2. Allosterically activated by GTP, when glutamine is the substrate; GTP has no effect on the reaction when ammonia is the substrate. The allosteric effector GTP functions by stabilizing the protein conformation that binds the tetrahedral intermediate(s) formed during glutamine hydrolysis. Inhibited by the product CTP, via allosteric rather than competitive inhibition. Catalyzes the ATP-dependent amination of UTP to CTP with either L-glutamine or ammonia as the source of nitrogen. Regulates intracellular CTP levels through interactions with the four ribonucleotide triphosphates. The polypeptide is CTP synthase (Ectopseudomonas mendocina (strain ymp) (Pseudomonas mendocina)).